A 404-amino-acid polypeptide reads, in one-letter code: Probable tRNA sulfurtransferase (404 aa).

In terms of domain architecture, THUMP spans 60-165 (QPVAESLKQI…EEAAYISYET (106 aa)). ATP is bound by residues 183-184 (ML), 208-209 (HF), R265, G287, and Q296.

This sequence belongs to the ThiI family.

Its subcellular location is the cytoplasm. The catalysed reaction is [ThiI sulfur-carrier protein]-S-sulfanyl-L-cysteine + a uridine in tRNA + 2 reduced [2Fe-2S]-[ferredoxin] + ATP + H(+) = [ThiI sulfur-carrier protein]-L-cysteine + a 4-thiouridine in tRNA + 2 oxidized [2Fe-2S]-[ferredoxin] + AMP + diphosphate. The enzyme catalyses [ThiS sulfur-carrier protein]-C-terminal Gly-Gly-AMP + S-sulfanyl-L-cysteinyl-[cysteine desulfurase] + AH2 = [ThiS sulfur-carrier protein]-C-terminal-Gly-aminoethanethioate + L-cysteinyl-[cysteine desulfurase] + A + AMP + 2 H(+). Its pathway is cofactor biosynthesis; thiamine diphosphate biosynthesis. Catalyzes the ATP-dependent transfer of a sulfur to tRNA to produce 4-thiouridine in position 8 of tRNAs, which functions as a near-UV photosensor. Also catalyzes the transfer of sulfur to the sulfur carrier protein ThiS, forming ThiS-thiocarboxylate. This is a step in the synthesis of thiazole, in the thiamine biosynthesis pathway. The sulfur is donated as persulfide by IscS. This chain is Probable tRNA sulfurtransferase, found in Streptococcus gordonii (strain Challis / ATCC 35105 / BCRC 15272 / CH1 / DL1 / V288).